The chain runs to 153 residues: UPF0756 membrane protein BCB4264_A4705 (153 aa).

The next 4 membrane-spanning stretches (helical) occupy residues Phe8–Ile28, Leu54–Phe74, Trp87–Leu107, and Leu117–Ile137.

It belongs to the UPF0756 family.

It is found in the cell membrane. This chain is UPF0756 membrane protein BCB4264_A4705, found in Bacillus cereus (strain B4264).